The chain runs to 882 residues: Putative HTH-type transcriptional regulator Rv0890c (882 aa).

Residues proline 814–glycine 879 form the HTH luxR-type domain. The H-T-H motif DNA-binding region spans asparagine 838–threonine 857.

In Mycobacterium tuberculosis (strain ATCC 25618 / H37Rv), this protein is Putative HTH-type transcriptional regulator Rv0890c.